We begin with the raw amino-acid sequence, 425 residues long: Gamma-glutamyl phosphate reductase (425 aa).

Belongs to the gamma-glutamyl phosphate reductase family.

It localises to the cytoplasm. It carries out the reaction L-glutamate 5-semialdehyde + phosphate + NADP(+) = L-glutamyl 5-phosphate + NADPH + H(+). Its pathway is amino-acid biosynthesis; L-proline biosynthesis; L-glutamate 5-semialdehyde from L-glutamate: step 2/2. Catalyzes the NADPH-dependent reduction of L-glutamate 5-phosphate into L-glutamate 5-semialdehyde and phosphate. The product spontaneously undergoes cyclization to form 1-pyrroline-5-carboxylate. The chain is Gamma-glutamyl phosphate reductase from Aromatoleum aromaticum (strain DSM 19018 / LMG 30748 / EbN1) (Azoarcus sp. (strain EbN1)).